Here is a 197-residue protein sequence, read N- to C-terminus: 3-isopropylmalate dehydratase small subunit (197 aa).

It belongs to the LeuD family. LeuD type 1 subfamily. Heterodimer of LeuC and LeuD.

It catalyses the reaction (2R,3S)-3-isopropylmalate = (2S)-2-isopropylmalate. Its pathway is amino-acid biosynthesis; L-leucine biosynthesis; L-leucine from 3-methyl-2-oxobutanoate: step 2/4. In terms of biological role, catalyzes the isomerization between 2-isopropylmalate and 3-isopropylmalate, via the formation of 2-isopropylmaleate. This is 3-isopropylmalate dehydratase small subunit (leuD) from Streptomyces coelicolor (strain ATCC BAA-471 / A3(2) / M145).